The primary structure comprises 319 residues: Ribonucleoside-diphosphate reductase small chain (319 aa).

The Fe cation site is built by aspartate 70, glutamate 101, and histidine 104. Residue tyrosine 108 is part of the active site. Residues glutamate 163, glutamate 197, and histidine 200 each coordinate Fe cation. The segment at 313–319 (FSLDVDF) is interaction with R1.

This sequence belongs to the ribonucleoside diphosphate reductase small chain family. As to quaternary structure, interacts with RNR1/OPG080 subunit. Can interact with host RNR1 supunit. Fe cation is required as a cofactor.

The enzyme catalyses a 2'-deoxyribonucleoside 5'-diphosphate + [thioredoxin]-disulfide + H2O = a ribonucleoside 5'-diphosphate + [thioredoxin]-dithiol. Its function is as follows. Ribonucleoside-diphosphate reductase holoenzyme provides the precursors necessary for viral DNA synthesis. Allows virus growth in non-dividing cells. Catalyzes the biosynthesis of deoxyribonucleotides from the corresponding ribonucleotides. The protein is Ribonucleoside-diphosphate reductase small chain (OPG048) of Homo sapiens (Human).